Consider the following 143-residue polypeptide: Submaxillary gland androgen-regulated protein 2, isoform gamma (143 aa).

The signal sequence occupies residues 1–22 (MKALYMVFVLWVLIGCFLSSEC). The tract at residues 28 to 50 (GQHDPTRPLSPSNPSSHFYPQPD) is disordered. Positions 36 to 45 (LSPSNPSSHF) are enriched in polar residues.

The protein resides in the secreted. May play a role in protection or detoxification. The protein is Submaxillary gland androgen-regulated protein 2, isoform gamma (Smr2) of Mus musculus (Mouse).